A 426-amino-acid chain; its full sequence is Serine hydroxymethyltransferase (426 aa).

(6S)-5,6,7,8-tetrahydrofolate is bound by residues Leu-122 and 126 to 128 (GHL). The residue at position 231 (Lys-231) is an N6-(pyridoxal phosphate)lysine.

This sequence belongs to the SHMT family. As to quaternary structure, homodimer. The cofactor is pyridoxal 5'-phosphate.

It localises to the cytoplasm. It catalyses the reaction (6R)-5,10-methylene-5,6,7,8-tetrahydrofolate + glycine + H2O = (6S)-5,6,7,8-tetrahydrofolate + L-serine. It participates in one-carbon metabolism; tetrahydrofolate interconversion. The protein operates within amino-acid biosynthesis; glycine biosynthesis; glycine from L-serine: step 1/1. In terms of biological role, catalyzes the reversible interconversion of serine and glycine with tetrahydrofolate (THF) serving as the one-carbon carrier. This reaction serves as the major source of one-carbon groups required for the biosynthesis of purines, thymidylate, methionine, and other important biomolecules. Also exhibits THF-independent aldolase activity toward beta-hydroxyamino acids, producing glycine and aldehydes, via a retro-aldol mechanism. The sequence is that of Serine hydroxymethyltransferase from Koribacter versatilis (strain Ellin345).